The primary structure comprises 363 residues: Peptide chain release factor 1 (363 aa).

Gln-236 is modified (N5-methylglutamine). The segment at Lys-286 to Ser-305 is disordered.

This sequence belongs to the prokaryotic/mitochondrial release factor family. Post-translationally, methylated by PrmC. Methylation increases the termination efficiency of RF1.

The protein resides in the cytoplasm. Its function is as follows. Peptide chain release factor 1 directs the termination of translation in response to the peptide chain termination codons UAG and UAA. This Wolbachia pipientis subsp. Culex pipiens (strain wPip) protein is Peptide chain release factor 1.